The chain runs to 177 residues: Peptidyl-tRNA hydrolase (177 aa).

A tRNA-binding site is contributed by Tyr-18. His-23 (proton acceptor) is an active-site residue. The tRNA site is built by Phe-65, Asn-67, and Asn-113.

It belongs to the PTH family. Monomer.

It localises to the cytoplasm. The enzyme catalyses an N-acyl-L-alpha-aminoacyl-tRNA + H2O = an N-acyl-L-amino acid + a tRNA + H(+). Hydrolyzes ribosome-free peptidyl-tRNAs (with 1 or more amino acids incorporated), which drop off the ribosome during protein synthesis, or as a result of ribosome stalling. Its function is as follows. Catalyzes the release of premature peptidyl moieties from peptidyl-tRNA molecules trapped in stalled 50S ribosomal subunits, and thus maintains levels of free tRNAs and 50S ribosomes. This chain is Peptidyl-tRNA hydrolase, found in Corynebacterium efficiens (strain DSM 44549 / YS-314 / AJ 12310 / JCM 11189 / NBRC 100395).